The sequence spans 182 residues: Succinate dehydrogenase cytochrome b560 subunit, mitochondrial (182 aa).

A helical membrane pass occupies residues 65-94 (LTWMLSGFHRISGCVMAGTLLVGGIGFAVL). Residues 95–114 (PFDFTAFVDFIRSWNLPCAV) are Mitochondrial intermembrane-facing. Residues 115–139 (TAVFKYIIAFPIIFHTLNGIRFLGF) form a helical membrane-spanning segment. His-129 is a heme binding site. Residues 140 to 147 (DLAKGVNN) lie on the Mitochondrial matrix side of the membrane. A helical membrane pass occupies residues 148 to 169 (VGQIYKSGYLVSGLSAILALAI). The Mitochondrial intermembrane segment spans residues 170–172 (VFN).

The protein belongs to the cytochrome b560 family. Component of complex II composed of four subunits: a flavoprotein (FP), iron-sulfur protein (IP), and a cytochrome b560 composed of two integral membrane proteins. The cofactor is heme.

It localises to the mitochondrion inner membrane. It participates in carbohydrate metabolism; tricarboxylic acid cycle. In terms of biological role, membrane-anchoring subunit of succinate dehydrogenase (SDH) that is involved in complex II of the mitochondrial electron transport chain and is responsible for transferring electrons from succinate to ubiquinone (coenzyme Q). Mediates resistance to enteropathogenic E.coli infection. This chain is Succinate dehydrogenase cytochrome b560 subunit, mitochondrial (mev-1), found in Caenorhabditis elegans.